We begin with the raw amino-acid sequence, 44 residues long: Non-structural protein 7b (44 aa).

A helical membrane pass occupies residues 9 to 29 (FYLCFLAFLLFLVLIMLIIFW).

It is found in the host membrane. The polypeptide is Non-structural protein 7b (Bat coronavirus Rp3/2004 (BtCoV/Rp3/2004)).